The following is a 356-amino-acid chain: HTH-type transcriptional regulator AglR (356 aa).

One can recognise an HTH lacI-type domain in the interval 1-57 (MPVNLKQLAELLGLSQTTVSRALNGYPEVNAETRARVLEAVRETGYRPNRAAQRLAT). The H-T-H motif DNA-binding region spans 5–24 (LKQLAELLGLSQTTVSRALN). Residues 337 to 356 (TGPAPDRSPLPNPSPQVGGA) are disordered.

Probable regulatory protein for the binding-protein-dependent transport system for alpha-glucosides such as sucrose, maltose and trehalose. The polypeptide is HTH-type transcriptional regulator AglR (aglR) (Rhizobium meliloti (strain 1021) (Ensifer meliloti)).